The chain runs to 174 residues: MHCPFCQHSDTRVIDSRVSEDGTTIRRRRECEACGERFSTLETIELKLPTVVKSDGGREAFDARKLRTSFDRALQKRPVAEEQIEAAVRSVVHQLRMSGEREVGSLRVGEYVMVELRKLDHVGYVRFASVYRSFQDVADFREEIEKLERELPVGSEQLPLLEVALERAGKPGKR.

The segment at Cys-3–Cys-34 is a zinc-finger region. Residues Pro-49–Asp-139 form the ATP-cone domain.

Belongs to the NrdR family. Zn(2+) serves as cofactor.

Functionally, negatively regulates transcription of bacterial ribonucleotide reductase nrd genes and operons by binding to NrdR-boxes. The protein is Transcriptional repressor NrdR of Xanthomonas oryzae pv. oryzae (strain MAFF 311018).